The sequence spans 299 residues: Tyrosine recombinase XerC (299 aa).

A Core-binding (CB) domain is found at 3–87 (PQCQSYLQQF…AIKQWGEFLL (85 aa)). The Tyr recombinase domain occupies 108-287 (PLPKNIDVDS…DFQHLAKVYD (180 aa)). Catalysis depends on residues Arg147, Lys171, His239, Arg242, and His265. Tyr274 acts as the O-(3'-phospho-DNA)-tyrosine intermediate in catalysis.

Belongs to the 'phage' integrase family. XerC subfamily. Forms a cyclic heterotetrameric complex composed of two molecules of XerC and two molecules of XerD.

Its subcellular location is the cytoplasm. Site-specific tyrosine recombinase, which acts by catalyzing the cutting and rejoining of the recombining DNA molecules. The XerC-XerD complex is essential to convert dimers of the bacterial chromosome into monomers to permit their segregation at cell division. It also contributes to the segregational stability of plasmids. This is Tyrosine recombinase XerC from Shewanella sp. (strain ANA-3).